Consider the following 188-residue polypeptide: MLKRVAIVLGGLLISAHALANTMVEMKTNLGNIEIELYNNKAPISAKNFESYVKNNFYNGTIFHRVIPNFMIQGGGFETNMKEKATAAPIKNEASNGLANTRGTLAMARTSNPDSATSQFFINVADNNFLNASRTDAGYAVFGKVIKGMDVVDKIANVPTSTYGMHQNVPKQPVKIISVQIKSINTAK.

A signal peptide spans 1–20; that stretch reads MLKRVAIVLGGLLISAHALA. Positions 21–181 constitute a PPIase cyclophilin-type domain; it reads NTMVEMKTNL…QPVKIISVQI (161 aa).

This sequence belongs to the cyclophilin-type PPIase family.

It is found in the periplasm. The catalysed reaction is [protein]-peptidylproline (omega=180) = [protein]-peptidylproline (omega=0). PPIases accelerate the folding of proteins. It catalyzes the cis-trans isomerization of proline imidic peptide bonds in oligopeptides. This protein is not essential for growth. Presumably plays a role in signal transduction. The chain is Peptidyl-prolyl cis-trans isomerase (rotA) from Acinetobacter baylyi (strain ATCC 33305 / BD413 / ADP1).